The chain runs to 486 residues: Probable glucan endo-1,3-beta-glucosidase eglC (486 aa).

Positions 1-18 (MQLTQLLALALSLATSEA) are cleaved as a signal peptide. The N-linked (GlcNAc...) asparagine glycan is linked to N84. E128 serves as the catalytic Proton donor. A glycan (N-linked (GlcNAc...) asparagine) is linked at N183. E239 serves as the catalytic Nucleophile. 4 N-linked (GlcNAc...) asparagine glycosylation sites follow: N315, N386, N396, and N404. Residues 330-458 (AAAGGVAGGS…SSGAASPSST (129 aa)) form a disordered region. 2 stretches are compositionally biased toward low complexity: residues 341 to 404 (GSAS…HGSN) and 413 to 424 (SVSNVSPSKSSS). Residues 430 to 442 (AATSMGASPSSVG) are compositionally biased toward polar residues. The span at 445-458 (GPSKSSGAASPSST) shows a compositional bias: low complexity. A lipid anchor (GPI-anchor amidated glycine) is attached at G463. The propeptide at 464 to 486 (AATSVSAPVVHVVLLALMMVIAA) is removed in mature form.

Belongs to the glycosyl hydrolase 17 family. Post-translationally, the GPI-anchor is attached to the protein in the endoplasmic reticulum and serves to target the protein to the cell surface. There, the glucosamine-inositol phospholipid moiety is cleaved off and the GPI-modified mannoprotein is covalently attached via its lipidless GPI glycan remnant to the 1,6-beta-glucan of the outer cell wall layer.

It is found in the cell membrane. Its subcellular location is the secreted. The protein localises to the cell wall. It catalyses the reaction Hydrolysis of (1-&gt;3)-beta-D-glucosidic linkages in (1-&gt;3)-beta-D-glucans.. Glucanases play a role in cell expansion during growth, in cell-cell fusion during mating, and in spore release during sporulation. This enzyme may be involved in beta-glucan degradation and also function biosynthetically as a transglycosylase. This Aspergillus terreus (strain NIH 2624 / FGSC A1156) protein is Probable glucan endo-1,3-beta-glucosidase eglC (eglC).